The sequence spans 124 residues: MKHTFLQVALGGALGSAARYGVNILAGRLTPGFPLGTLSVNIAGCLAMGLLAALLAHRGGQHLAPFLLTGMLGGFTTFSAFALDTMTLWERGEIATALGYVLGSVVLSLAAVIAGLTVGRGLFA.

4 helical membrane passes run 5–25, 35–55, 63–83, and 98–118; these read FLQVALGGALGSAARYGVNIL, LGTLSVNIAGCLAMGLLAALL, LAPFLLTGMLGGFTTFSAFAL, and LGYVLGSVVLSLAAVIAGLTV. Na(+) contacts are provided by Gly-73 and Thr-76.

Belongs to the fluoride channel Fluc/FEX (TC 1.A.43) family.

Its subcellular location is the cell inner membrane. It catalyses the reaction fluoride(in) = fluoride(out). Its activity is regulated as follows. Na(+) is not transported, but it plays an essential structural role and its presence is essential for fluoride channel function. Fluoride-specific ion channel. Important for reducing fluoride concentration in the cell, thus reducing its toxicity. The polypeptide is Fluoride-specific ion channel FluC (Paracoccus denitrificans (strain Pd 1222)).